A 526-amino-acid chain; its full sequence is tRNA-2-methylthio-N(6)-dimethylallyladenosine synthase (526 aa).

A disordered region spans residues 1-24 (MTQQLNHAKVNQHPGQATLPETAE). Positions 28-144 (RTYEVKTYGC…LPTLLQRAEH (117 aa)) constitute an MTTase N-terminal domain. Positions 37, 73, 107, 181, 185, and 188 each coordinate [4Fe-4S] cluster. The 237-residue stretch at 167–403 (RESAYAGWVS…MVVQEQVCEE (237 aa)) folds into the Radical SAM core domain. Residues 406–477 (QKLIGTTVEL…PFFLIADSGV (72 aa)) enclose the TRAM domain.

The protein belongs to the methylthiotransferase family. MiaB subfamily. In terms of assembly, monomer. [4Fe-4S] cluster is required as a cofactor.

Its subcellular location is the cytoplasm. The catalysed reaction is N(6)-dimethylallyladenosine(37) in tRNA + (sulfur carrier)-SH + AH2 + 2 S-adenosyl-L-methionine = 2-methylsulfanyl-N(6)-dimethylallyladenosine(37) in tRNA + (sulfur carrier)-H + 5'-deoxyadenosine + L-methionine + A + S-adenosyl-L-homocysteine + 2 H(+). In terms of biological role, catalyzes the methylthiolation of N6-(dimethylallyl)adenosine (i(6)A), leading to the formation of 2-methylthio-N6-(dimethylallyl)adenosine (ms(2)i(6)A) at position 37 in tRNAs that read codons beginning with uridine. The sequence is that of tRNA-2-methylthio-N(6)-dimethylallyladenosine synthase from Corynebacterium glutamicum (strain R).